The sequence spans 229 residues: Transmembrane protein 217 (229 aa).

Residues 13 to 33 (MGTVLSGVFTIMAVDMYLIFE) form a helical membrane-spanning segment. Asn-39 is a glycosylation site (N-linked (GlcNAc...) asparagine). Helical transmembrane passes span 67-87 (IVLF…YSVY), 94-114 (LVIY…IQIL), and 129-149 (WFGL…VINY). N-linked (GlcNAc...) asparagine glycosylation is present at Asn-156.

Its subcellular location is the membrane. This is Transmembrane protein 217 (TMEM217) from Homo sapiens (Human).